A 942-amino-acid chain; its full sequence is Isoleucine--tRNA ligase (942 aa).

Residues 58–68 carry the 'HIGH' region motif; sequence PYANGDIHIGH. E566 lines the L-isoleucyl-5'-AMP pocket. The 'KMSKS' region motif lies at 607-611; sequence KMSKS. K610 contacts ATP. Zn(2+)-binding residues include C905, C908, C925, and C928.

Belongs to the class-I aminoacyl-tRNA synthetase family. IleS type 1 subfamily. As to quaternary structure, monomer. It depends on Zn(2+) as a cofactor.

The protein localises to the cytoplasm. The enzyme catalyses tRNA(Ile) + L-isoleucine + ATP = L-isoleucyl-tRNA(Ile) + AMP + diphosphate. In terms of biological role, catalyzes the attachment of isoleucine to tRNA(Ile). As IleRS can inadvertently accommodate and process structurally similar amino acids such as valine, to avoid such errors it has two additional distinct tRNA(Ile)-dependent editing activities. One activity is designated as 'pretransfer' editing and involves the hydrolysis of activated Val-AMP. The other activity is designated 'posttransfer' editing and involves deacylation of mischarged Val-tRNA(Ile). This Vibrio parahaemolyticus serotype O3:K6 (strain RIMD 2210633) protein is Isoleucine--tRNA ligase.